Consider the following 244-residue polypeptide: Ubiquinone/menaquinone biosynthesis C-methyltransferase UbiE (244 aa).

S-adenosyl-L-methionine-binding positions include Thr-70, Asp-91, and 117-118 (DA).

The protein belongs to the class I-like SAM-binding methyltransferase superfamily. MenG/UbiE family.

It carries out the reaction a 2-demethylmenaquinol + S-adenosyl-L-methionine = a menaquinol + S-adenosyl-L-homocysteine + H(+). The enzyme catalyses a 2-methoxy-6-(all-trans-polyprenyl)benzene-1,4-diol + S-adenosyl-L-methionine = a 5-methoxy-2-methyl-3-(all-trans-polyprenyl)benzene-1,4-diol + S-adenosyl-L-homocysteine + H(+). The protein operates within quinol/quinone metabolism; menaquinone biosynthesis; menaquinol from 1,4-dihydroxy-2-naphthoate: step 2/2. It participates in cofactor biosynthesis; ubiquinone biosynthesis. Methyltransferase required for the conversion of demethylmenaquinol (DMKH2) to menaquinol (MKH2) and the conversion of 2-polyprenyl-6-methoxy-1,4-benzoquinol (DDMQH2) to 2-polyprenyl-3-methyl-6-methoxy-1,4-benzoquinol (DMQH2). In Nitrosospira multiformis (strain ATCC 25196 / NCIMB 11849 / C 71), this protein is Ubiquinone/menaquinone biosynthesis C-methyltransferase UbiE.